We begin with the raw amino-acid sequence, 143 residues long: uncharacterized protein (143 aa).

This is an uncharacterized protein from Mycobacterium tuberculosis (strain CDC 1551 / Oshkosh).